The primary structure comprises 334 residues: MIEADRLIAADAQSEEEFLDRAIRPKTLADYVGQPQVRGQMEIFIKAAKLRGDALDHLLIFGPPGLGKTTLANIVANEMGVNLRTTSGPVLEKAGDLAAMLTNLEPHDVLFIDEIHRLSPVVEEVLYPAMEDYQLDIMIGEGPAARSIKIDLPPFTLVGATTRAGSLTSPLRDRFGIVQRLEFYQVADLQHIVGRSAHCLGLALTDEGALEVARRSRGTPRIANRLLRRVRDFAEVCADGRIDGEVAAQALNMLDVDAAGFDYMDRKLLLAVIDKFMGGPVGLDNLAAAIGEERETIEDVLEPYLIQQGFIQRTPRGRIATVHAYQHFGIDRAE.

Residues 4 to 184 (ADRLIAADAQ…FGIVQRLEFY (181 aa)) are large ATPase domain (RuvB-L). ATP contacts are provided by residues isoleucine 23, arginine 24, glycine 65, lysine 68, threonine 69, threonine 70, 131–133 (EDY), arginine 174, tyrosine 184, and arginine 221. Threonine 69 contacts Mg(2+). The tract at residues 185 to 255 (QVADLQHIVG…VAAQALNMLD (71 aa)) is small ATPAse domain (RuvB-S). Positions 258 to 334 (AAGFDYMDRK…YQHFGIDRAE (77 aa)) are head domain (RuvB-H). DNA-binding residues include arginine 294, arginine 313, and arginine 318.

The protein belongs to the RuvB family. As to quaternary structure, homohexamer. Forms an RuvA(8)-RuvB(12)-Holliday junction (HJ) complex. HJ DNA is sandwiched between 2 RuvA tetramers; dsDNA enters through RuvA and exits via RuvB. An RuvB hexamer assembles on each DNA strand where it exits the tetramer. Each RuvB hexamer is contacted by two RuvA subunits (via domain III) on 2 adjacent RuvB subunits; this complex drives branch migration. In the full resolvosome a probable DNA-RuvA(4)-RuvB(12)-RuvC(2) complex forms which resolves the HJ.

Its subcellular location is the cytoplasm. The catalysed reaction is ATP + H2O = ADP + phosphate + H(+). Its function is as follows. The RuvA-RuvB-RuvC complex processes Holliday junction (HJ) DNA during genetic recombination and DNA repair, while the RuvA-RuvB complex plays an important role in the rescue of blocked DNA replication forks via replication fork reversal (RFR). RuvA specifically binds to HJ cruciform DNA, conferring on it an open structure. The RuvB hexamer acts as an ATP-dependent pump, pulling dsDNA into and through the RuvAB complex. RuvB forms 2 homohexamers on either side of HJ DNA bound by 1 or 2 RuvA tetramers; 4 subunits per hexamer contact DNA at a time. Coordinated motions by a converter formed by DNA-disengaged RuvB subunits stimulates ATP hydrolysis and nucleotide exchange. Immobilization of the converter enables RuvB to convert the ATP-contained energy into a lever motion, pulling 2 nucleotides of DNA out of the RuvA tetramer per ATP hydrolyzed, thus driving DNA branch migration. The RuvB motors rotate together with the DNA substrate, which together with the progressing nucleotide cycle form the mechanistic basis for DNA recombination by continuous HJ branch migration. Branch migration allows RuvC to scan DNA until it finds its consensus sequence, where it cleaves and resolves cruciform DNA. The sequence is that of Holliday junction branch migration complex subunit RuvB from Edwardsiella ictaluri (strain 93-146).